A 92-amino-acid polypeptide reads, in one-letter code: Small ribosomal subunit protein uS19c (92 aa).

Belongs to the universal ribosomal protein uS19 family.

The protein resides in the plastid. The protein localises to the chloroplast. Its function is as follows. Protein S19 forms a complex with S13 that binds strongly to the 16S ribosomal RNA. This is Small ribosomal subunit protein uS19c from Phaseolus angularis (Azuki bean).